We begin with the raw amino-acid sequence, 333 residues long: Tetraacyldisaccharide 4'-kinase (333 aa).

Residue 55-62 (TAGGNGKT) coordinates ATP.

It belongs to the LpxK family.

The enzyme catalyses a lipid A disaccharide + ATP = a lipid IVA + ADP + H(+). The protein operates within glycolipid biosynthesis; lipid IV(A) biosynthesis; lipid IV(A) from (3R)-3-hydroxytetradecanoyl-[acyl-carrier-protein] and UDP-N-acetyl-alpha-D-glucosamine: step 6/6. Its function is as follows. Transfers the gamma-phosphate of ATP to the 4'-position of a tetraacyldisaccharide 1-phosphate intermediate (termed DS-1-P) to form tetraacyldisaccharide 1,4'-bis-phosphate (lipid IVA). The chain is Tetraacyldisaccharide 4'-kinase from Proteus mirabilis (strain HI4320).